Reading from the N-terminus, the 434-residue chain is MQVSVEATQGLERRLTISVPAEQIEKLVKDSLQREAKRARIPGFRPGKVPITVINKRYGAAIRQDIMGEVMQRNFIEAIIAEKLNPAGAPTFVPGSTDGEKFEFIATFEIYPEVELKGLDAIEVEQPKAEVTDADVDTMIETLRKQHATFAAVEREAADGDKVKMNFVGSVDGEEFEGGKADDFELQLGSGRMIPGFETGILGHKAGEEFVIDVNFPEEYHAENLKGKAAKFAITLTEVQAANLPEVNDEFAALFGISEGGLEALKAEIRKNMNRELEQALKANVKEQVINGLLANNDITLPKALIDGEVNVLRQQAMQRFGNQTANMPELPAELFTEQAARRVKIGLLLGEVIKTNELKAEDERVQGLIASMASAYEDPSEVVAYYNSNKELMQNMRNVALEEQAVEALLKSAKVTEKEVAFEEFMNKATGRA.

The PPIase FKBP-type domain maps to 160–245 (GDKVKMNFVG…LTEVQAANLP (86 aa)).

The protein belongs to the FKBP-type PPIase family. Tig subfamily.

The protein localises to the cytoplasm. It catalyses the reaction [protein]-peptidylproline (omega=180) = [protein]-peptidylproline (omega=0). Involved in protein export. Acts as a chaperone by maintaining the newly synthesized protein in an open conformation. Functions as a peptidyl-prolyl cis-trans isomerase. The sequence is that of Trigger factor from Shewanella baltica (strain OS185).